The primary structure comprises 331 residues: DNA-directed RNA polymerase subunit alpha (331 aa).

Residues 1–237 (MQSFEKEFLK…DQLSSFIDLK (237 aa)) form an alpha N-terminal domain (alpha-NTD) region. The segment at 251–331 (FDPSLLNLVD…NWPPKHLSEQ (81 aa)) is alpha C-terminal domain (alpha-CTD).

This sequence belongs to the RNA polymerase alpha chain family. Homodimer. The RNAP catalytic core consists of 2 alpha, 1 beta, 1 beta' and 1 omega subunit. When a sigma factor is associated with the core the holoenzyme is formed, which can initiate transcription.

It carries out the reaction RNA(n) + a ribonucleoside 5'-triphosphate = RNA(n+1) + diphosphate. Its function is as follows. DNA-dependent RNA polymerase catalyzes the transcription of DNA into RNA using the four ribonucleoside triphosphates as substrates. The sequence is that of DNA-directed RNA polymerase subunit alpha from Blochmanniella floridana.